A 65-amino-acid chain; its full sequence is Large ribosomal subunit protein uL29 (65 aa).

Belongs to the universal ribosomal protein uL29 family.

The polypeptide is Large ribosomal subunit protein uL29 (Parabacteroides distasonis (strain ATCC 8503 / DSM 20701 / CIP 104284 / JCM 5825 / NCTC 11152)).